Consider the following 1377-residue polypeptide: MDALNRNQIGPGCQTQTMVQKGPLDLIETGKGLKVQTDKPHLVSLGSGRLSTAITLLPLEEGRTVIGSAARDISLQGPGLAPEHCYIENLRGTLTLYPCGNACTIDGLPVRQPTRLTQGCMLCLGQSTFLRFNHPAEAKWMKSMIPAGGRAPGPPYSPVPAESESLVNGNHTPQTATRGPSACASHSSLVSSIEKDLQEIMDSLVLEEPGAAGKKPAATSPLSPMANGGRYLLSPPTSPGAMSVGSSYENTSPAFSPLSSPASSGSCASHSPSGQEPGPSVPPLVPARSSSYHLALQPPQSRPSGARSESPRLSRKGGHERPPSPGLRGLLTDSPAATVLAEARRATESPRLGGQLPVVAISLSEYPASGALSQPTSIPGSPKFQPPVPAPRNKIGTLQDRPPSPFREPPGSERVLTTSPSRQLVGRTFSDGLATRTLQPPESPRLGRRGLDSMRELPPLSPSLSRRALSPLPTRTTPDPKLNREVAESPRPRRWAAHGASPEDFSLTLGARGRRTRSPSPTLGESLAPHKGSFSGRLSPAYSLGSLTGASPCQSPCVQRKLSSGDLRVPVTRERKNSITEISDNEDDLLEYHRRQRQERLREQEMERLERQRLETILNLCAEYSRADGGPEAGELPSIGEATAALALAGRRPSRGLAGASGRSSEEPGVATQRLWESMERSDEENLKEECSSTESTQQEHEDAPSTKLQGEVLALEEERAQVLGHVEQLKVRVKELEQQLQESAREAEMERALLQGEREAERALLQKEQKAVDQLQEKLVALETGIQKERDKEAEALETETKLFEDLEFQQLERESRVEEERELAGQGLLRSKAELLRSIAKRKERLAILDSQAGQIRAQAVQESERLARDKNASLQLLQKEKEKLTVLERRYHSLTGGRPFPKTTSTLKEMEKLLLPAVDLEQWYQELMAGLGTGPAAASPHSSPPPLPAKASRQLQVYRSKMDGEATSPLPRTRSGPLPSSSGSSSSSSQLSVATLGRSPSPKSALLTQNGTGSLPRNLAATLQDIETKRQLALQQKGQQVIEEQRRRLAELKQKAAAEAQCQWDALHGAAPFPAGPSGFPPLMHHSILHHLPAGRERGEEGEHAYDTLSLESSDSMETSISTGGNSACSPDNMSSASGLDMGKIEEMEKMLKEAHAEKNRLMESREREMELRRQALEEERRRREQVERRLQSESARRQQLVEKEVKMREKQFSQARPLTRYLPIRKEDFDLKTHIESSGHGVDTCLHVVLSSKVCRGYLVKMGGKIKSWKKRWFVFDRLKRTLSYYVDKHETKLKGVIYFQAIEEVYYDHLRSAAKKRFFRFTMVTESPNPALTFCVKTHDRLYYMVAPSAEAMRIWMDVIVTGAEGYTQFMN.

Serine 51 is modified (phosphoserine). The FHA domain maps to 64–125 (TVIGSAARDI…LTQGCMLCLG (62 aa)). Residue arginine 131 is modified to Asymmetric dimethylarginine. The segment at 150–187 (RAPGPPYSPVPAESESLVNGNHTPQTATRGPSACASHS) is disordered. The segment covering 165–178 (SLVNGNHTPQTATR) has biased composition (polar residues). 3 positions are modified to phosphoserine: serine 192, serine 220, and serine 223. 2 disordered regions span residues 211–334 (AAGK…LTDS) and 370–535 (GALS…GSFS). Residues 252–273 (SPAFSPLSSPASSGSCASHSPS) are compositionally biased toward low complexity. The span at 288-303 (RSSSYHLALQPPQSRP) shows a compositional bias: polar residues. Residues 309–322 (ESPRLSRKGGHERP) are compositionally biased toward basic and acidic residues. Residues serine 324, serine 334, serine 381, serine 404, serine 430, serine 443, serine 461, serine 470, serine 489, and serine 501 each carry the phosphoserine modification. A compositionally biased stretch (low complexity) spans 456-473 (ELPPLSPSLSRRALSPLP). Over residues 481–491 (KLNREVAESPR) the composition is skewed to basic and acidic residues. Omega-N-methylarginine is present on arginine 512. Serine 518 and serine 520 each carry phosphoserine. Position 522 is a phosphothreonine (threonine 522). Phosphoserine occurs at positions 533, 539, 551, 555, 563, 578, and 583. The segment covering 653 to 663 (PSRGLAGASGR) has biased composition (low complexity). Disordered stretches follow at residues 653–707 (PSRG…APST), 936–1019 (TGPA…GSLP), and 1119–1138 (SMET…DNMS). The span at 677–691 (ESMERSDEENLKEEC) shows a compositional bias: basic and acidic residues. The residue at position 678 (serine 678) is a Phosphoserine. Residues 683 to 809 (DEENLKEECS…TETKLFEDLE (127 aa)) are a coiled coil. A phosphoserine mark is found at serine 971 and serine 1017. Residues 971-992 (SPLPRTRSGPLPSSSGSSSSSS) show a composition bias toward low complexity. Positions 1009–1018 (LLTQNGTGSL) are enriched in polar residues. A coiled-coil region spans residues 1144–1208 (DMGKIEEMEK…ARRQQLVEKE (65 aa)). A PH domain is found at 1256 to 1370 (SKVCRGYLVK…WMDVIVTGAE (115 aa)).

This is Pleckstrin homology-like domain family B member 1 (PHLDB1) from Homo sapiens (Human).